The following is a 245-amino-acid chain: Ribonuclease 3 (245 aa).

The region spanning 19–148 (FKVFQEKIGI…FIGALYLDQG (130 aa)) is the RNase III domain. Mg(2+) is bound at residue glutamate 61. Aspartate 65 is a catalytic residue. The Mg(2+) site is built by aspartate 134 and glutamate 137. Glutamate 137 is an active-site residue. The DRBM domain occupies 174 to 243 (DYKSQLQELI…AAEALKKLKE (70 aa)).

It belongs to the ribonuclease III family. In terms of assembly, homodimer. Requires Mg(2+) as cofactor.

The protein resides in the cytoplasm. It catalyses the reaction Endonucleolytic cleavage to 5'-phosphomonoester.. In terms of biological role, digests double-stranded RNA. Involved in the processing of primary rRNA transcript to yield the immediate precursors to the large and small rRNAs (23S and 16S). Processes some mRNAs, and tRNAs when they are encoded in the rRNA operon. Processes pre-crRNA and tracrRNA of type II CRISPR loci if present in the organism. The protein is Ribonuclease 3 of Bacillus cereus (strain ATCC 14579 / DSM 31 / CCUG 7414 / JCM 2152 / NBRC 15305 / NCIMB 9373 / NCTC 2599 / NRRL B-3711).